We begin with the raw amino-acid sequence, 99 residues long: Beta-2-microglobulin (99 aa).

One can recognise an Ig-like C1-type domain in the interval 5 to 93 (PRVQVYSRHP…HITLSEPKIV (89 aa)). A disulfide bridge connects residues C25 and C80.

It belongs to the beta-2-microglobulin family. Heterodimer of an alpha chain and a beta chain. Beta-2-microglobulin is the beta-chain of major histocompatibility complex class I molecules.

The protein localises to the secreted. Its function is as follows. Component of the class I major histocompatibility complex (MHC). Involved in the presentation of peptide antigens to the immune system. This chain is Beta-2-microglobulin (B2M), found in Cavia porcellus (Guinea pig).